We begin with the raw amino-acid sequence, 120 residues long: Large ribosomal subunit protein bL19 (120 aa).

It belongs to the bacterial ribosomal protein bL19 family.

This protein is located at the 30S-50S ribosomal subunit interface and may play a role in the structure and function of the aminoacyl-tRNA binding site. The polypeptide is Large ribosomal subunit protein bL19 (Renibacterium salmoninarum (strain ATCC 33209 / DSM 20767 / JCM 11484 / NBRC 15589 / NCIMB 2235)).